Consider the following 207-residue polypeptide: MARYTGASCRQCRREGMKLFLKGDRCYTDKCAIVKRNYAPGQHGQGRKKVSNYGLQLREKQKVKRIYGVLETQFRNLYERAENMPGKAGENLLSLLERRLDNVVYRMGLASSRKEARQLVTHGHFTLNGNKVDIPSLIVKVGDVIEVKEKSRSSAKFKNLVEVNSRIAPKWLEANVEGMTAKVVGVPTREDIDLEIAEHLIIELYSK.

The 67-residue stretch at 98–164 (RRLDNVVYRM…AKFKNLVEVN (67 aa)) folds into the S4 RNA-binding domain.

The protein belongs to the universal ribosomal protein uS4 family. As to quaternary structure, part of the 30S ribosomal subunit. Contacts protein S5. The interaction surface between S4 and S5 is involved in control of translational fidelity.

One of the primary rRNA binding proteins, it binds directly to 16S rRNA where it nucleates assembly of the body of the 30S subunit. Its function is as follows. With S5 and S12 plays an important role in translational accuracy. This chain is Small ribosomal subunit protein uS4, found in Clostridioides difficile (strain 630) (Peptoclostridium difficile).